The chain runs to 2935 residues: MASHNVMNLARDVKSAAVRDREKAVDELSHLLNPRNRSTNLSDLGDKSYHEIFEAIFSFVLREKPVLSDRKKSQATLNSTATRLSKCAEAVRMTVGRGNSKIGRKTLLAIVDHITQVLPGPNGDDFVTPLLQDYIKALTEVLSRPAHVEILARKGGQHWETCVGFFLDVAQYLLPDEADISTLSLARASPALTRSSPAPGSGYSRSGGRSTPSTQSQRRAAPGEGGLLKDVLEGLHYIVIGGNAPILRQYKDITLVVLRVLSLKQLSLGSLQTLAFAIINTVFTTTNADDLAHASSVVQSILPLMSYWWRCEKVSQDEVIRALRIEISRSIFLMHLHIENLVINSSDEKIRSDLEELTENIWSEYSRRSEAFRLQMSDITFALSSLPTYGLQLNMFGLRAHNVYGEGHWAVIQNLAFLEGIMLLPQSRTPADDAEQSEQRRKRRRIEQDMSRIRLKLKTVEVGVRGTALQLIPFLLADNSLSRDELVDLLPELALLATDKNPVTASWALIASASCISKPEVCHDQIDVWRQLWHFATRSVSLPGTSRAASVLLHAILEADVLPYHTISQDINNMVTTADVNGPSVLCDTSISLMFHVLQLRNARVPSASQSTCHHIIRWVFLRWNPNESTFASYHSMHAQPIQLVNLIRACCGTTALELNSHQAAPGGPLTETWSSFKQTEKFTRYVLLAKDEFHDADPIGCCDLSEQSDPASLVDANSRYASRKLTLELFYPKLSELSDLCTSWNKKPNEGGIQISFDRFQSLLSACLAGTLLLPIFGDLNSTQSSSVDSTLKYILDKALNSALTSVEPTAFVDSVLRVVRAVMPDMITSSLNRIQANNPDLFHLFGRIWKSIGQQKDQTDPDNNIDLMDIDEDFDSQSSRASSVHAPVAAPRFNIQMKLDMQTFYIETKARLRFLSILDSDFGQIGLVPDTYVDHLIKMPDEDLLMCQSLLLELFGSDLVITPENALSIIERLGDCISLSEYQCAEVALSTCIGVIDGLHSIWLNDKQHLSERVGDLYYHFIKVCLTSNIFSPGVQMSMVQLLFTLLRTNTEYGKDQGLDSPRTCLLYILKNGPMSVKYTISQKIADIFDLFVLKLHDEVFVDVLDSLPTDPLDTTGIAFRLLVLSNLACRWSTLLRRCTYHIFETPGKIPRSTDYATRCLVNVSRTLNLESPKALFRLFSRQLLYTWLEYDHIEDIPFSIFGFKTLGDLLKSAQSEAIGLTVMRGQDQTFAEVCHLLGSSESDLVRENFTTAVAYSMIFGDSNGGDDKERGEAHVKRLLGRAAYMELIYINFVDIAALFFDLIDQENSFERVFARFKLDYAGQILSAVKAISHSPAELPANQQPMFKAKYLINELHRLCQNTEFQFHDLWTPPVVVSIARKLLNTVHPALGPLHACSVLRKVRVLISLGGSVALESYPLEMLLNATRTFITDSECADDALGISQYLLAEGARHLSNVPSFLAGYALSTLASLRVFLESSQSSTTQESQFKATMSKAEKFHVWISKYLEEYESPMFKNLEQRSAFKSITRSAARIRSSGNAERGTAESKLLLDILADQAADHQLLNEPSRQLALGLLCGDFSIPETIKDDVIESDEDALKYSTAVWKSCDTENLSEEYLSWAGRVVGRAFSASGEIPTGVLRESNLSQYQKMAPGSNGSETGILYLLQDLTSNPDSITAGLAEAALRSIVSDANNLDDELLAVACQKSLTESLLVTSQWGTHRSPPSDKGLITPTSSPNQLDVWSTDITSKDWLLNLSAHLARYVPESIVLSVLAPILARVEHFAERAFPFVVHLALFFTRNQQHSPKRQLSVAIKSWLECTVTEAKENQKLLINMLLYLRTQQYPKESSIADRSHWLEVDSALVAAAASRCGMYKTSLLFVEYVPPETSRSSRTSSAATKEVDMSETLLAIFENIDDPDAYYGLPEEPSLSKILARVEYENDGPMSLAFRGAEYDSNVHLGNPMAQSDGQALVRAFSTLGLSGPSNWFLQTQDNMETSPPVLEDTFNTARKLGIWNLPAPPSDHHAVTVFKAYQSIHQATDIANVRAAVHDGFGRTMSSLVVHSLNATALRKRLGALASLTELDDVLGVSDSSEMNLLIEKFKNRSGWMRSGLYESVGQILSCRSTTMSMVSQQETLRTNIKLSAATARQMEVESMITASQIYRYHQATQESLKISTILTKLIPSCTALDLHVDAAVTIEAANSAWDYGQMSTSIRMLQDIDKDSVLEKQTLPVSRSDLLSKIGYQVSVARLEKPHDIQKNYLEPALKELKGKGQGRQAGSVFHQFAMFCDQQLQDPDGLEDLARLQSLKKAKSDEVSELKTLISGTRDTQLKTRYSHVLNKEKQWLNLDEQELRRVEQTRSEFVRLSLENYLLSLIASDEHNNDALRFTALWLERSEEESTNQAVMRHLSEVPTRKFAGLTNQLTSRLQDNNTTFQKLLLELVYKICVDHPYHGMYQIWSGTKAKAQQKDDVAVLRVRATDRVAKSLAETQSVANIWLSIDKTSKYYHALAMDRNPNKYKSGVKIPLRDSTPGHNLVNCLAKYRIPSPTMHIELSATKDYSKVPIISKLEPTMTIASGVSAPKIITAVGSDGVRYKQLVKGGHDDLRQDAIMEQVFSAVSSLLKLHRITQQRNLSIRTYKVLPLTASSGLIEFVPNTIPLHEFLMPAHERYYPKDLKGSQCRKEIFGVQGRAVATRISTYRRMTEKFHPVMRYFFMENFMDPDEWFLKRLAYTRSTAAISMLGHVLGLGDRHGHNILLDHKTGEVVHIDLGVAFEAGRILPVPEMVPFRLTRDIVDGMGITKTEGVFRRCCEFTLDALREEQYSIMTILDVLRFDPLYTWSISPLRLAKLQKARHNDDSPMDDEQSEAETKKGKKAAGHVNEPSEADRALEVVRKKLSKTLSVTATVNDLINQATDERNLAVLYSGWAAYA.

The tract at residues 191–222 (ALTRSSPAPGSGYSRSGGRSTPSTQSQRRAAP) is disordered. Residues 194 to 217 (RSSPAPGSGYSRSGGRSTPSTQSQ) show a composition bias toward low complexity. One can recognise an FAT domain in the interval 1866 to 2468 (LVAAAASRCG…MYQIWSGTKA (603 aa)). Residues 2573 to 2884 (LEPTMTIASG…KKGKKAAGHV (312 aa)) form the PI3K/PI4K catalytic domain. Residues 2579-2585 (IASGVSA) form a G-loop region. Positions 2751-2759 (GLGDRHGHN) are catalytic loop. Positions 2771-2795 (HIDLGVAFEAGRILPVPEMVPFRLT) are activation loop. The segment at 2857-2889 (ARHNDDSPMDDEQSEAETKKGKKAAGHVNEPSE) is disordered. In terms of domain architecture, FATC spans 2903-2935 (KTLSVTATVNDLINQATDERNLAVLYSGWAAYA).

It belongs to the PI3/PI4-kinase family. ATM subfamily. Associates with DNA double-strand breaks.

It is found in the nucleus. It localises to the chromosome. Its subcellular location is the telomere. It catalyses the reaction L-seryl-[protein] + ATP = O-phospho-L-seryl-[protein] + ADP + H(+). The enzyme catalyses L-threonyl-[protein] + ATP = O-phospho-L-threonyl-[protein] + ADP + H(+). Functionally, serine/threonine protein kinase which activates checkpoint signaling upon genotoxic stresses such as ionizing radiation (IR), ultraviolet light (UV), or DNA replication stalling, thereby acting as a DNA damage sensor. Recognizes the substrate consensus sequence [ST]-Q. Phosphorylates histone H2A to form H2AS128ph (gamma-H2A) at sites of DNA damage, involved in the regulation of DNA damage response mechanism. Required for the control of telomere length and genome stability. The sequence is that of Serine/threonine-protein kinase TEL1 (TEL1) from Gibberella zeae (strain ATCC MYA-4620 / CBS 123657 / FGSC 9075 / NRRL 31084 / PH-1) (Wheat head blight fungus).